The following is a 235-amino-acid chain: Glycerol-3-phosphate acyltransferase (235 aa).

6 consecutive transmembrane segments (helical) span residues 4–24 (LLAI…IMAG), 56–76 (SVTL…VAFF), 94–114 (LLAG…GFKG), 125–145 (LIGI…LTVW), 152–172 (VASI…KYVF), and 191–211 (FHDS…LAIL).

It belongs to the PlsY family. In terms of assembly, probably interacts with PlsX.

The protein localises to the cell inner membrane. It catalyses the reaction an acyl phosphate + sn-glycerol 3-phosphate = a 1-acyl-sn-glycero-3-phosphate + phosphate. It functions in the pathway lipid metabolism; phospholipid metabolism. Functionally, catalyzes the transfer of an acyl group from acyl-phosphate (acyl-PO(4)) to glycerol-3-phosphate (G3P) to form lysophosphatidic acid (LPA). This enzyme utilizes acyl-phosphate as fatty acyl donor, but not acyl-CoA or acyl-ACP. The protein is Glycerol-3-phosphate acyltransferase of Chlorobium luteolum (strain DSM 273 / BCRC 81028 / 2530) (Pelodictyon luteolum).